The following is a 277-amino-acid chain: MENNETSVDAKSIKNLETQTIHGSKSMDSGKYLDNSYKMDYPEMGLCIIINNKNFHKNTGMSSRSGTDVNAANLGETFMNLKYEVRNKNDLTREEIMELMYNVSKEDHSKRSSFICVILSHGDEGVIYGTNGPIELKKLTSFFRGDYCRSLTGKPKLFIIQACRGTELDSGIETDSGVDYDMACQKIPVEADFLYAYSTAPGYYSWRNSEEGSWFIQSLCAMLKEYAHKLEFMHILTRVNRKVATEFESYSLDATFHAKKQIPCIVSMLTKELYFYH.

N-acetylmethionine is present on Met-1. Propeptides lie at residues 1–9 (MENNETSVD) and 10–28 (AKSI…KSMD). Lys-11 carries the N6-acetyllysine modification. Phosphoserine is present on Ser-26. Residues His-121 and Cys-163 contribute to the active site. Residue Cys-163 is modified to S-nitrosocysteine; in inhibited form.

It belongs to the peptidase C14A family. Heterotetramer that consists of two anti-parallel arranged heterodimers, each one formed by a 17 kDa (p17) and a 12 kDa (p12) subunit. Interacts with BIRC6/bruce. In terms of processing, cleavage by granzyme B, caspase-6, caspase-8 and caspase-10 generates the two active subunits. Additional processing of the propeptides is likely due to the autocatalytic activity of the activated protease. Active heterodimers between the small subunit of caspase-7 protease and the large subunit of caspase-3 also occur and vice versa. Post-translationally, S-nitrosylated on its catalytic site cysteine in unstimulated cell lines and denitrosylated upon activation of the Fas apoptotic pathway, associated with an increase in intracellular caspase activity. Fas therefore activates caspase-3 not only by inducing the cleavage of the caspase zymogen to its active subunits, but also by stimulating the denitrosylation of its active site thiol. Ubiquitinated by BIRC6; this activity is inhibited by DIABLO/SMAC.

It is found in the cytoplasm. The catalysed reaction is Strict requirement for an Asp residue at positions P1 and P4. It has a preferred cleavage sequence of Asp-Xaa-Xaa-Asp-|- with a hydrophobic amino-acid residue at P2 and a hydrophilic amino-acid residue at P3, although Val or Ala are also accepted at this position.. Its activity is regulated as follows. Inhibited by BIRC6; following inhibition of BIRC6-caspase binding by DIABLO/SMAC, BIRC6 is subjected to caspase cleavage, leading to an increase in active caspases. Its function is as follows. Involved in the activation cascade of caspases responsible for apoptosis execution. At the onset of apoptosis, it proteolytically cleaves poly(ADP-ribose) polymerase PARP1 at a '216-Asp-|-Gly-217' bond. Cleaves and activates sterol regulatory element binding proteins (SREBPs) between the basic helix-loop-helix leucine zipper domain and the membrane attachment domain. Cleaves and activates caspase-6, -7 and -9 (CASP6, CASP7 and CASP9, respectively). Cleaves and inactivates interleukin-18 (IL18). Triggers cell adhesion in sympathetic neurons through RET cleavage. Cleaves IL-1 beta between an Asp and an Ala, releasing the mature cytokine which is involved in a variety of inflammatory processes. Cleaves and inhibits serine/threonine-protein kinase AKT1 in response to oxidative stress. Acts as an inhibitor of type I interferon production during virus-induced apoptosis by mediating cleavage of antiviral proteins CGAS, IRF3 and MAVS, thereby preventing cytokine overproduction. Also involved in pyroptosis by mediating cleavage and activation of gasdermin-E (GSDME). Cleaves XRCC4 and phospholipid scramblase proteins XKR4, XKR8 and XKR9, leading to promote phosphatidylserine exposure on apoptotic cell surface. Cleaves BIRC6 following inhibition of BIRC6-caspase binding by DIABLO/SMAC. The sequence is that of Caspase-3 (CASP3) from Oryctolagus cuniculus (Rabbit).